Consider the following 464-residue polypeptide: Glutamate--tRNA ligase (464 aa).

Positions 10-20 (PSPTGHLHLGG) match the 'HIGH' region motif. Zn(2+) contacts are provided by Cys99, Cys101, Cys126, and Glu128. Residues 236 to 240 (KLSKR) carry the 'KMSKS' region motif. Lys239 provides a ligand contact to ATP.

This sequence belongs to the class-I aminoacyl-tRNA synthetase family. Glutamate--tRNA ligase type 1 subfamily. As to quaternary structure, monomer. Zn(2+) is required as a cofactor.

The protein localises to the cytoplasm. It carries out the reaction tRNA(Glu) + L-glutamate + ATP = L-glutamyl-tRNA(Glu) + AMP + diphosphate. Functionally, catalyzes the attachment of glutamate to tRNA(Glu) in a two-step reaction: glutamate is first activated by ATP to form Glu-AMP and then transferred to the acceptor end of tRNA(Glu). In Oleidesulfovibrio alaskensis (strain ATCC BAA-1058 / DSM 17464 / G20) (Desulfovibrio alaskensis), this protein is Glutamate--tRNA ligase.